A 607-amino-acid polypeptide reads, in one-letter code: CRS2-associated factor 2, chloroplastic (607 aa).

Residues 1 to 75 (MSPPPPQRPS…GNGGNPAFRA (75 aa)) form a disordered region. Residues 1 to 79 (MSPPPPQRPS…NPAFRAPHLR (79 aa)) constitute a chloroplast transit peptide. 2 consecutive CRM domains span residues 228-324 (EPLT…TRPR) and 346-442 (EGLT…YPKP). Positions 482–505 (KMFELWTNAIESSVALMLDDAEVD) are CRS2 binding. The segment at 550–576 (TEDEPETGTLEPQQHEFTESSDVAEDD) is disordered.

As to quaternary structure, interacts with CRS2 and RNA. Part of large ribonucleo-protein complexes that include group IIB introns, CRS2 and CAF2.

It localises to the plastid. It is found in the chloroplast stroma. In terms of biological role, required for the splicing of group IIB introns in chloroplasts. Forms splicing particles with CRS2. Interacts with RNA and confers intron specificity of the splicing particles. In Oryza sativa subsp. japonica (Rice), this protein is CRS2-associated factor 2, chloroplastic.